The sequence spans 635 residues: Isethionate TRAP transporter permease protein DctMQ (635 aa).

The next 16 helical transmembrane spans lie at 38-58 (KPFLVAGMLAIIFIITFQTLY), 75-95 (TEEMARFIFIWISYLAVPVAI), 117-137 (ISWIIVDVCFLTLAATVLWQS), 154-174 (LQLPYYIPYLVLPVSFGLMAV), 192-212 (TVIGLILCAVLAAPLFIADYI), 217-237 (VLFGYFALFLVVGVPIAIGLG), 266-286 (FPIMAIPFFIAAGVFMGAGGL), 299-319 (GALPGGMALATIGTCMFFAAI), 350-370 (AIVAAAGAIGVMIPPSNPFVV), 379-399 (IGKLFMGGIVPGLLTGLALMA), 431-451 (WALMVPVIVLGGIYGGIMTPT), 453-473 (AAALAAFYGLIIGCFVHRELS), 481-501 (VVEAAGTSAMVIVLMSMATIF), 526-546 (IAILLMINVLLLIIGTFMEAL), 572-592 (IIMVVNLAIGFVTPPVGVNLF), and 609-629 (VLPLIALMLAVLLITTYVPAI).

In the N-terminal section; belongs to the TRAP transporter small permease family. It in the C-terminal section; belongs to the TRAP transporter large permease family. The complex comprises the periplasmic solute receptor protein DctP, and the fused transmembrane protein DctMQ.

Its subcellular location is the cell inner membrane. It functions in the pathway organosulfur degradation; alkanesulfonate degradation. Functionally, part of the tripartite ATP-independent periplasmic (TRAP) transport system DctPQM involved in the uptake of isethionate (2-hydroxyethanesulfonate), which is then catabolized by enzymes encoded by adjacent genes in the locus. Thereby is involved in an anaerobic respiration pathway that converts the sulfonate isethionate to ammonia, acetate and sulfide. The protein is Isethionate TRAP transporter permease protein DctMQ of Oleidesulfovibrio alaskensis (strain ATCC BAA-1058 / DSM 17464 / G20) (Desulfovibrio alaskensis).